Reading from the N-terminus, the 160-residue chain is UPF0262 protein BSUIS_A0274 (160 aa).

Belongs to the UPF0262 family.

This Brucella suis (strain ATCC 23445 / NCTC 10510) protein is UPF0262 protein BSUIS_A0274.